The sequence spans 357 residues: 39 kDa FK506-binding nuclear protein (357 aa).

Serine 92 carries the phosphoserine modification. The interval 113 to 251 (KNSKKSEDDE…ASKDPRTITG (139 aa)) is disordered. Acidic residues predominate over residues 120 to 182 (DDEDENESGE…QDSDDSEAEE (63 aa)). 2 positions are modified to phosphoserine: serine 193 and serine 197. The span at 222–237 (EKPEAKKEQPKAKEPA) shows a compositional bias: basic and acidic residues. In terms of domain architecture, PPIase FKBP-type spans 269–357 (GKRVSVYYIG…VFEVELKAVH (89 aa)).

This sequence belongs to the FKBP-type PPIase family. Ubiquitously expressed, highest levels in ovary.

Its subcellular location is the nucleus. The catalysed reaction is [protein]-peptidylproline (omega=180) = [protein]-peptidylproline (omega=0). In terms of biological role, PPIases accelerate the folding of proteins. May function in a signal transduction cascade during early development. This Drosophila melanogaster (Fruit fly) protein is 39 kDa FK506-binding nuclear protein.